A 166-amino-acid polypeptide reads, in one-letter code: PTS system glucose-specific EIIA component (166 aa).

The 105-residue stretch at 34–138 (DPVFAQKMMG…SIISPIIITN (105 aa)) folds into the PTS EIIA type-1 domain. H71 and H86 together coordinate Zn(2+). The active-site Tele-phosphohistidine intermediate; for EIIA activity is the H86. H86 carries the phosphohistidine; by HPr modification.

Heterodimer with glycerol kinase (glpk). Zn(2+) is required as a cofactor.

The protein resides in the cytoplasm. In terms of biological role, the phosphoenolpyruvate-dependent sugar phosphotransferase system (sugar PTS), a major carbohydrate active transport system, catalyzes the phosphorylation of incoming sugar substrates concomitantly with their translocation across the cell membrane. The enzyme II complex composed of PtsG and Crr is involved in glucose transport. This chain is PTS system glucose-specific EIIA component (crr), found in Staphylococcus epidermidis (strain ATCC 35984 / DSM 28319 / BCRC 17069 / CCUG 31568 / BM 3577 / RP62A).